Reading from the N-terminus, the 412-residue chain is L-cysteine:1D-myo-inositol 2-amino-2-deoxy-alpha-D-glucopyranoside ligase (412 aa).

Position 43 (Cys43) interacts with Zn(2+). Residues 43–46 (CGIT), Thr58, and 81–83 (NVT) each bind L-cysteinyl-5'-AMP. The 'HIGH' region signature appears at 45–55 (ITPYDATHLGH). Residues 187-192 (ERGGDP) carry the 'ERGGDP' region motif. Trp227 is an L-cysteinyl-5'-AMP binding site. Cys231 serves as a coordination point for Zn(2+). 249 to 251 (GSD) contributes to the L-cysteinyl-5'-AMP binding site. His256 provides a ligand contact to Zn(2+). Ile283 is a binding site for L-cysteinyl-5'-AMP. A 'KMSKS' region motif is present at residues 289–293 (KMSKS).

The protein belongs to the class-I aminoacyl-tRNA synthetase family. MshC subfamily. In terms of assembly, monomer. Zn(2+) is required as a cofactor.

The catalysed reaction is 1D-myo-inositol 2-amino-2-deoxy-alpha-D-glucopyranoside + L-cysteine + ATP = 1D-myo-inositol 2-(L-cysteinylamino)-2-deoxy-alpha-D-glucopyranoside + AMP + diphosphate + H(+). Catalyzes the ATP-dependent condensation of GlcN-Ins and L-cysteine to form L-Cys-GlcN-Ins. This is L-cysteine:1D-myo-inositol 2-amino-2-deoxy-alpha-D-glucopyranoside ligase from Saccharopolyspora erythraea (strain ATCC 11635 / DSM 40517 / JCM 4748 / NBRC 13426 / NCIMB 8594 / NRRL 2338).